The chain runs to 49 residues: Large ribosomal subunit protein bL33A (49 aa).

It belongs to the bacterial ribosomal protein bL33 family.

In Geobacillus thermodenitrificans (strain NG80-2), this protein is Large ribosomal subunit protein bL33A.